The chain runs to 438 residues: Methyl-coenzyme M reductase subunit beta (438 aa).

Tyrosine 367 contacts coenzyme M. Glycine 369 is a coenzyme B binding site.

Belongs to the methyl-coenzyme M reductase beta subunit family. MCR is a hexamer of two alpha, two beta, and two gamma chains, forming a dimer of heterotrimers. Coenzyme F430 is required as a cofactor.

The protein localises to the cytoplasm. It catalyses the reaction coenzyme B + methyl-coenzyme M = methane + coenzyme M-coenzyme B heterodisulfide. It functions in the pathway one-carbon metabolism; methyl-coenzyme M reduction; methane from methyl-coenzyme M: step 1/1. Component of the methyl-coenzyme M reductase (MCR) I that catalyzes the reductive cleavage of methyl-coenzyme M (CoM-S-CH3 or 2-(methylthio)ethanesulfonate) using coenzyme B (CoB or 7-mercaptoheptanoylthreonine phosphate) as reductant which results in the production of methane and the mixed heterodisulfide of CoB and CoM (CoM-S-S-CoB). This is the final step in methanogenesis. The protein is Methyl-coenzyme M reductase subunit beta (mcrB) of Methanothermus fervidus.